The chain runs to 1771 residues: Kinase D-interacting substrate of 220 kDa (1771 aa).

At 1–499 (MSVLISQSVI…QIEPLFQFSW (499 aa)) the chain is on the cytoplasmic side. 12 ANK repeats span residues 4-33 (LISQ…DVDE), 37-66 (CGQT…NCNL), 70-99 (DNWT…NLEH), 103-132 (GGWT…NPSV), 136-165 (YSVY…KVNC), 169-198 (YGTT…DVDQ), 202-231 (NSMT…NVNL), 235-264 (DGNT…YVNI), 268-297 (SGDT…DIDI), 301-330 (DNKT…DTEI), 334-363 (DGET…KVSA), and 367-396 (KGDT…DGRL). The KAP NTPase domain maps to 440–953 (YDLYSSALAD…NIVSVTGRLL (514 aa)). A helical membrane pass occupies residues 500–520 (LIVFLTLLLCGGLGLLFAFTV). Residues 521–524 (HPNL) are Extracellular-facing. The chain crosses the membrane as a helical span at residues 525–545 (GIAVSLSFLALLYIFFIVIYF). Residues 546–659 (GGRREGESWN…KWKKTCCLPS (114 aa)) lie on the Cytoplasmic side of the membrane. The chain crosses the membrane as a helical span at residues 660 to 680 (FVIFLFIIGCIISGITLLAIF). Topologically, residues 681–685 (RVDPK) are extracellular. The helical transmembrane segment at 686–706 (HLTVNAVLISIASVVGLAFVL) threads the bilayer. The Cytoplasmic portion of the chain corresponds to 707–1771 (NCRTWWQVLD…GFGEERESIL (1065 aa)). Residues Ser-882 and Ser-885 each carry the phosphoserine modification. Thr-914 carries the post-translational modification Phosphothreonine. Ser-918 bears the Phosphoserine mark. Residues 1089 to 1092 (PRAP) form a mediates interaction with CRKL region. Ser-1163 bears the Phosphoserine mark. 4 disordered regions span residues 1182–1202 (DAAE…PAPG), 1285–1310 (PEDP…RASH), 1344–1368 (RHSN…SQDS), and 1397–1564 (LEGG…EPIR). 6 positions are modified to phosphoserine: Ser-1296, Ser-1352, Ser-1359, Ser-1361, Ser-1362, and Ser-1365. Residues 1346–1358 (SNLSWQSQTRRTP) show a composition bias toward polar residues. Positions 1359–1368 (SLSSLNSQDS) are enriched in low complexity. A compositionally biased stretch (polar residues) spans 1403–1430 (STTISGRSSPHSTYYMGQSSSGGSIHSN). Residues 1431-1457 (LEQEKGKDSEPKPDDGRKSFLMKRGDV) are compositionally biased toward basic and acidic residues. Residues 1460–1470 (YSSSGVSTNDA) are compositionally biased toward polar residues. Phosphoserine occurs at positions 1521, 1526, 1555, and 1574. Residues 1522–1532 (DEDESGTEESD) are compositionally biased toward acidic residues. Basic and acidic residues predominate over residues 1537 to 1561 (LKDDKDRKAEGKVERVPKSPEHSAE). Residues 1578 to 1633 (LDKKDSSDSGVRSSESSPNHSLHNEVADDSQLEKANLIELEDDSHSGKRGIPHSLS) form a disordered region. The span at 1585-1594 (DSGVRSSESS) shows a compositional bias: low complexity. 2 positions are modified to phosphoserine: Ser-1623 and Ser-1633. Thr-1679 carries the post-translational modification Phosphothreonine. A Phosphoserine modification is found at Ser-1681. Thr-1684 carries the phosphothreonine modification. The segment covering 1713–1731 (LRPSSSPNPTTIQNENLKS) has biased composition (polar residues). The segment at 1713–1771 (LRPSSSPNPTTIQNENLKSMTHKRSQRSSYTRLSKDPPELHAAASSESTGFGEERESIL) is disordered. Positions 1766–1771 (ERESIL) match the PDZ-binding motif.

As to quaternary structure, found in a complex, at least composed of KIDINS220, MAGI2, NTRK1 and RAPGEF2; the complex is mainly formed at late endosomes in a nerve growth factor (NGF)-dependent manner. Interacts with RAPGEF2; the interaction is strengthened after NGF stimulation. Isoform 2 interacts (via C-terminal domain) with MAGI2 isoform 1 (via PDZ domain). Interacts with NTRK1, NTRK2, NTRK3, ERKL and NGFR. Can form a ternary complex with NGFR and NTRK1 and this complex is affected by the expression levels of KIDINS220/ARMS. An increase in KIDINS220/ARMS expression leads to a decreased association of NGFR and NTRK1. Interacts (via PDZ-binding motif) with SNTA1 and SNTB2 (via PDZ domains). Interacts with EPHA4 and PRKD1. Tyrosine phosphorylated by NTRK1, NTRK2, EPHB2 and EPHA4. Phosphorylation at Ser-918 is induced by phorbol ester treatment. Phosphorylation by NTRK2 is induced by brain-derived neurotrophic factor (BDNF) and neurotrophin-4/5. Phosphorylation by NTRK1 is induced by nerve growth factor (NGF). Abundant in developing and adult neural tissues as well as neuroendocrine cells and dendritic cells. Overexpressed in melanoma and melanoma cell lines.

It localises to the membrane. It is found in the late endosome. Functionally, promotes a prolonged MAP-kinase signaling by neurotrophins through activation of a Rap1-dependent mechanism. Provides a docking site for the CRKL-C3G complex, resulting in Rap1-dependent sustained ERK activation. May play an important role in regulating postsynaptic signal transduction through the syntrophin-mediated localization of receptor tyrosine kinases such as EPHA4. In cooperation with SNTA1 can enhance EPHA4-induced JAK/STAT activation. Plays a role in nerve growth factor (NGF)-induced recruitment of RAPGEF2 to late endosomes and neurite outgrowth. May play a role in neurotrophin- and ephrin-mediated neuronal outgrowth and in axon guidance during neural development and in neuronal regeneration. Modulates stress-induced apoptosis of melanoma cells via regulation of the MEK/ERK signaling pathway. This is Kinase D-interacting substrate of 220 kDa (KIDINS220) from Homo sapiens (Human).